Here is a 466-residue protein sequence, read N- to C-terminus: UDP-N-acetylmuramoylalanine--D-glutamate ligase (466 aa).

128–134 serves as a coordination point for ATP; it reads GTNGKST.

Belongs to the MurCDEF family.

The protein resides in the cytoplasm. It carries out the reaction UDP-N-acetyl-alpha-D-muramoyl-L-alanine + D-glutamate + ATP = UDP-N-acetyl-alpha-D-muramoyl-L-alanyl-D-glutamate + ADP + phosphate + H(+). Its pathway is cell wall biogenesis; peptidoglycan biosynthesis. Its function is as follows. Cell wall formation. Catalyzes the addition of glutamate to the nucleotide precursor UDP-N-acetylmuramoyl-L-alanine (UMA). The sequence is that of UDP-N-acetylmuramoylalanine--D-glutamate ligase from Bartonella henselae (strain ATCC 49882 / DSM 28221 / CCUG 30454 / Houston 1) (Rochalimaea henselae).